Consider the following 2164-residue polypeptide: Hemagglutinin A (2164 aa).

A signal peptide spans 1 to 25; that stretch reads MRKLNSLFSLAVLLSLLCWGQTAAA. Peptidase C25-like regions lie at residues 26-539, 540-991, and 992-1443; these read QGGP…TPPP, GGSS…TPPP, and GGTS…TPPP. Disordered stretches follow at residues 493 to 512 and 520 to 541; these read WDAPNGTPNPNPGTTTLSES and SWKTIDADGDGNNWTTTPPPGG. A compositionally biased stretch (low complexity) spans 496–508; sequence PNGTPNPNPGTTT.

Belongs to the peptidase C25 family.

Functionally, agglutinates erythrocytes. The sequence is that of Hemagglutinin A (hagA) from Porphyromonas gingivalis (strain ATCC BAA-308 / W83).